Here is a 1004-residue protein sequence, read N- to C-terminus: 2-oxoglutarate dehydrogenase E1 component (1004 aa).

Belongs to the alpha-ketoglutarate dehydrogenase family. In terms of assembly, homodimer. Part of the 2-oxoglutarate dehydrogenase (OGDH) complex composed of E1 (2-oxoglutarate dehydrogenase), E2 (dihydrolipoamide succinyltransferase) and E3 (dihydrolipoamide dehydrogenase); the complex contains multiple copies of the three enzymatic components (E1, E2 and E3). Requires thiamine diphosphate as cofactor.

The catalysed reaction is N(6)-[(R)-lipoyl]-L-lysyl-[protein] + 2-oxoglutarate + H(+) = N(6)-[(R)-S(8)-succinyldihydrolipoyl]-L-lysyl-[protein] + CO2. E1 component of the 2-oxoglutarate dehydrogenase (OGDH) complex which catalyzes the decarboxylation of 2-oxoglutarate, the first step in the conversion of 2-oxoglutarate to succinyl-CoA and CO(2). The polypeptide is 2-oxoglutarate dehydrogenase E1 component (Brucella suis biovar 1 (strain 1330)).